The chain runs to 146 residues: Large ribosomal subunit protein uL15 (146 aa).

The interval 1 to 54 is disordered; it reads MKLHELKPAAGSKKAPKRIGRGTGSGLGRNAGKGEKGQNARSGGGVRPGFEGGQ. Composition is skewed to gly residues over residues 21 to 31 and 42 to 52; these read RGTGSGLGRNA and SGGGVRPGFEG.

Belongs to the universal ribosomal protein uL15 family. Part of the 50S ribosomal subunit.

Binds to the 23S rRNA. This Clostridium beijerinckii (strain ATCC 51743 / NCIMB 8052) (Clostridium acetobutylicum) protein is Large ribosomal subunit protein uL15.